The sequence spans 264 residues: Apolipoprotein A-I (264 aa).

Positions 1–18 (MKAVVLTVAVFFLTGSQA) are cleaved as a signal peptide. Repeat copies occupy residues 67-88 (LKLL…EQIG) and 89-110 (PVTQ…QEMN). The 10 X approximate tandem repeats stretch occupies residues 67–264 (LKLLDNWDSL…DEATKKLTTQ (198 aa)). At Met-109 the chain carries Methionine sulfoxide. The 3; half-length repeat unit spans residues 111–121 (KDLEEVKLKVQ). Repeat copies occupy residues 122-143 (PYLD…QQVE), 144-165 (PLGT…EKLS), and 166-187 (PLGQ…THLA). The 7; truncated repeat unit spans residues 188–207 (PYSDELRQRLAARLEALKES). Residues 208–229 (SSLADYQAKATEHLSALGEKAK) form repeat 8. A 9; half-length repeat occupies 230–240 (PALEDLRQGLL). Repeat 10 spans residues 241-264 (PVLENLKMSFWSAVDEATKKLTTQ).

This sequence belongs to the apolipoprotein A1/A4/E family. As to quaternary structure, homodimer. Interacts with APOA1BP and CLU. Component of a sperm activating protein complex (SPAP), consisting of APOA1, an immunoglobulin heavy chain, an immunoglobulin light chain and albumin. Interacts with NDRG1. Interacts with SCGB3A2. Interacts with NAXE and YJEFN3. Post-translationally, glycosylated. Palmitoylated. In terms of processing, phosphorylation sites are present in the extracellular medium.

The protein resides in the secreted. Its function is as follows. Participates in the reverse transport of cholesterol from tissues to the liver for excretion by promoting cholesterol efflux from tissues and by acting as a cofactor for the lecithin cholesterol acyltransferase (LCAT). As part of the SPAP complex, activates spermatozoa motility. This is Apolipoprotein A-I (ApoA1) from Marmota monax (Woodchuck).